The sequence spans 315 residues: Ribosomal RNA small subunit methyltransferase H (315 aa).

S-adenosyl-L-methionine contacts are provided by residues 35–37 (AGH), aspartate 55, phenylalanine 84, aspartate 105, and glutamine 112.

It belongs to the methyltransferase superfamily. RsmH family.

Its subcellular location is the cytoplasm. The enzyme catalyses cytidine(1402) in 16S rRNA + S-adenosyl-L-methionine = N(4)-methylcytidine(1402) in 16S rRNA + S-adenosyl-L-homocysteine + H(+). Specifically methylates the N4 position of cytidine in position 1402 (C1402) of 16S rRNA. The polypeptide is Ribosomal RNA small subunit methyltransferase H (Streptococcus agalactiae serotype III (strain NEM316)).